A 41-amino-acid chain; its full sequence is Large ribosomal subunit protein bL36 (41 aa).

Belongs to the bacterial ribosomal protein bL36 family.

The polypeptide is Large ribosomal subunit protein bL36 (Nitrobacter hamburgensis (strain DSM 10229 / NCIMB 13809 / X14)).